We begin with the raw amino-acid sequence, 552 residues long: Ribosomal lysine N-methyltransferase 3 (552 aa).

Positions 26 to 335 constitute an SET domain; sequence SKCDIRESPL…QGQEIFNSYG (310 aa). Y334 is a binding site for S-adenosyl-L-methionine. A disordered region spans residues 399–432; sequence EDEEDEDGQAKSDNLSDDIESEEEEEEEEGDDSL. Residues 413-432 show a composition bias toward acidic residues; sequence LSDDIESEEEEEEEEGDDSL.

Belongs to the class V-like SAM-binding methyltransferase superfamily.

The protein resides in the nucleus. S-adenosyl-L-methionine-dependent protein-lysine N-methyltransferase that monomethylates 60S ribosomal protein L42 (RPL42A and RPL42B) at 'Lys-40'. This chain is Ribosomal lysine N-methyltransferase 3, found in Saccharomyces cerevisiae (strain ATCC 204508 / S288c) (Baker's yeast).